The following is a 515-amino-acid chain: Phospholipase A1-Igamma1, chloroplastic (515 aa).

A chloroplast-targeting transit peptide spans 1–44; the sequence is MATIPSHNLRPHTTNQRTQYSLSFRPHFSRSTLITFPARSSPAR. The GXSXG signature appears at 301 to 305; it reads GHSLG. The active-site Acyl-ester intermediate is Ser303. Active-site charge relay system residues include Asp366 and His422.

Belongs to the AB hydrolase superfamily. Lipase family. In terms of tissue distribution, ubiquitous. Highly expressed in leaves.

The protein resides in the plastid. It is found in the chloroplast. It catalyses the reaction 1,2-dihexadecanoyl-sn-glycero-3-phosphocholine + H2O = 2-hexadecanoyl-sn-glycero-3-phosphocholine + hexadecanoate + H(+). It carries out the reaction a 1,2-diacyl-3-O-(beta-D-galactosyl)-sn-glycerol + H2O = an acyl-3-O-(beta-D-galactosyl)-sn-glycerol + a fatty acid + H(+). The catalysed reaction is a 1,2-diacyl-3-O-[alpha-D-galactosyl-(1-&gt;6)-beta-D-galactosyl]-sn-glycerol + H2O = acyl-3-O-[alpha-D-galactosyl-(1-&gt;6)-beta-D-galactosyl]-sn-glycerol + a fatty acid + H(+). Functionally, acylhydrolase with a broad specificity. Catalyzes the hydrolysis of phosphatidylcholine at the sn-1 position. Moderate activity toward phosphatidylcholine (PC), monogalactosyldiacylglycerol (MGDG), digalactosyldiacylglycerol (DGDG) and triacylglycerol (TAG). May display dual sn-1/sn-2 substrate specificity. Could be involved in early wound response. In Arabidopsis thaliana (Mouse-ear cress), this protein is Phospholipase A1-Igamma1, chloroplastic.